The primary structure comprises 158 residues: Cyclic pyranopterin monophosphate synthase (158 aa).

Residues 75-77 (LCH) and 113-114 (ME) each bind substrate. Asp128 is an active-site residue.

The protein belongs to the MoaC family. Homohexamer; trimer of dimers.

It catalyses the reaction (8S)-3',8-cyclo-7,8-dihydroguanosine 5'-triphosphate = cyclic pyranopterin phosphate + diphosphate. It participates in cofactor biosynthesis; molybdopterin biosynthesis. Its function is as follows. Catalyzes the conversion of (8S)-3',8-cyclo-7,8-dihydroguanosine 5'-triphosphate to cyclic pyranopterin monophosphate (cPMP). This chain is Cyclic pyranopterin monophosphate synthase, found in Vibrio campbellii (strain ATCC BAA-1116).